The sequence spans 523 residues: BTB/POZ domain-containing protein 3 (523 aa).

Residues 85-114 form an ANK repeat; sequence FDYSPLVLASLCGHEPVVKFLLENGALCER. BTB domains are found at residues 167 to 223 and 306 to 373; these read TDIV…RYLY and HDAY…DIAP.

As to quaternary structure, interacts with cul3. Post-translationally, ubiquitinated and targeted for cul3-dependent degradation.

It is found in the cytoplasm. The protein operates within protein modification; protein ubiquitination. Probable substrate-specific adapter of an E3 ubiquitin-protein ligase complex which mediates the ubiquitination and subsequent proteasomal degradation of target proteins. This is BTB/POZ domain-containing protein 3 (btb3) from Schizosaccharomyces pombe (strain 972 / ATCC 24843) (Fission yeast).